A 149-amino-acid polypeptide reads, in one-letter code: Large ribosomal subunit protein uL15 (149 aa).

Over residues 1-12 (MSEPIKLHDLRP) the composition is skewed to basic and acidic residues. Residues 1–55 (MSEPIKLHDLRPAKGANKPKTRVGRGEASKGKTAGRGTKGTKARKQVSAAFEGGQ) form a disordered region.

This sequence belongs to the universal ribosomal protein uL15 family. Part of the 50S ribosomal subunit.

Functionally, binds to the 23S rRNA. The protein is Large ribosomal subunit protein uL15 of Corynebacterium kroppenstedtii (strain DSM 44385 / JCM 11950 / CIP 105744 / CCUG 35717).